The primary structure comprises 281 residues: Pantothenate synthetase (281 aa).

30–37 contacts ATP; it reads MGYYHAGH. The active-site Proton donor is the His-37. (R)-pantoate is bound at residue Gln-61. Gln-61 is a binding site for beta-alanine. An ATP-binding site is contributed by 147–150; it reads GEKD. Gln-153 contributes to the (R)-pantoate binding site. Residues Val-176 and 184 to 187 contribute to the ATP site; that span reads MSSR.

The protein belongs to the pantothenate synthetase family. In terms of assembly, homodimer.

The protein resides in the cytoplasm. The enzyme catalyses (R)-pantoate + beta-alanine + ATP = (R)-pantothenate + AMP + diphosphate + H(+). It participates in cofactor biosynthesis; (R)-pantothenate biosynthesis; (R)-pantothenate from (R)-pantoate and beta-alanine: step 1/1. Its function is as follows. Catalyzes the condensation of pantoate with beta-alanine in an ATP-dependent reaction via a pantoyl-adenylate intermediate. The polypeptide is Pantothenate synthetase (Oleidesulfovibrio alaskensis (strain ATCC BAA-1058 / DSM 17464 / G20) (Desulfovibrio alaskensis)).